The following is a 512-amino-acid chain: Cercosporin MFS transporter CTB4 (512 aa).

Transmembrane regions (helical) follow at residues 72–92 (WVIT…SSVF), 110–130 (VVLG…IFWG), 142–162 (LLAG…ARSL), 170–190 (FLGG…LADI), 202–222 (TVGA…SVLV), 230–250 (WIAN…FPFL), 306–326 (ILLM…NFFL), 343–363 (ASLP…LLSF), 383–403 (LLLM…FAWT), 407–427 (TMNP…IHLI), 456–476 (LFAA…GVKW), and 480–500 (ILAL…YFGA).

The protein belongs to the major facilitator superfamily. CAR1 family.

The protein localises to the cell membrane. Its function is as follows. MFS transporter; part of the gene cluster that mediates the biosynthesis of cercosporin, a light-activated, non-host-selective toxin. The perylenequinone chromophore of cercosporin absorbs light energy to attain an electronically-activated triplet state and produces active oxygen species such as the hydroxyl radical, superoxide, hydrogen peroxide or singlet oxygen upon reaction with oxygen molecules. These reactive oxygen species cause damage to various cellular components including lipids, proteins and nucleic acids. Responsible for secretion and accumulation of cercosporin, but does not play any roles in self-protection against the toxicity of cercosporin. The sequence is that of Cercosporin MFS transporter CTB4 from Cercospora nicotianae (Barn spot disease fungus).